Here is a 122-residue protein sequence, read N- to C-terminus: Large ribosomal subunit protein bL20 (122 aa).

This sequence belongs to the bacterial ribosomal protein bL20 family.

Its function is as follows. Binds directly to 23S ribosomal RNA and is necessary for the in vitro assembly process of the 50S ribosomal subunit. It is not involved in the protein synthesizing functions of that subunit. The protein is Large ribosomal subunit protein bL20 of Saccharopolyspora erythraea (strain ATCC 11635 / DSM 40517 / JCM 4748 / NBRC 13426 / NCIMB 8594 / NRRL 2338).